The sequence spans 256 residues: Thiazole synthase (256 aa).

The Schiff-base intermediate with DXP role is filled by Lys-95. Residues Gly-156, 182–183 (AG), and 204–205 (NT) contribute to the 1-deoxy-D-xylulose 5-phosphate site.

This sequence belongs to the ThiG family. As to quaternary structure, homotetramer. Forms heterodimers with either ThiH or ThiS.

Its subcellular location is the cytoplasm. The enzyme catalyses [ThiS sulfur-carrier protein]-C-terminal-Gly-aminoethanethioate + 2-iminoacetate + 1-deoxy-D-xylulose 5-phosphate = [ThiS sulfur-carrier protein]-C-terminal Gly-Gly + 2-[(2R,5Z)-2-carboxy-4-methylthiazol-5(2H)-ylidene]ethyl phosphate + 2 H2O + H(+). Its pathway is cofactor biosynthesis; thiamine diphosphate biosynthesis. Its function is as follows. Catalyzes the rearrangement of 1-deoxy-D-xylulose 5-phosphate (DXP) to produce the thiazole phosphate moiety of thiamine. Sulfur is provided by the thiocarboxylate moiety of the carrier protein ThiS. In vitro, sulfur can be provided by H(2)S. This chain is Thiazole synthase, found in Salmonella typhi.